A 282-amino-acid polypeptide reads, in one-letter code: Inositol oxygenase (282 aa).

The disordered stretch occupies residues 1–25 (MKDPDPSQVYRPDMDPEAAKDKGSF). The span at 12 to 24 (PDMDPEAAKDKGS) shows a compositional bias: basic and acidic residues. R26 serves as a coordination point for substrate. The residue at position 30 (S30) is a Phosphoserine. 82–84 (DES) serves as a coordination point for substrate. Fe cation is bound by residues H95, H120, and D121. Residues K124 and 138–139 (GD) contribute to the substrate site. Fe cation-binding residues include H191, H217, and D250. A substrate-binding site is contributed by 217–218 (HS).

This sequence belongs to the myo-inositol oxygenase family. Fe cation serves as cofactor. In terms of processing, the N-terminus is blocked. As to expression, kidney specific.

It localises to the cytoplasm. The catalysed reaction is myo-inositol + O2 = D-glucuronate + H2O + H(+). It participates in polyol metabolism; myo-inositol degradation into D-glucuronate; D-glucuronate from myo-inositol: step 1/1. The polypeptide is Inositol oxygenase (MIOX) (Sus scrofa (Pig)).